A 217-amino-acid chain; its full sequence is Probable GTP-binding protein EngB (217 aa).

Residues 44 to 217 (DRVEVCFAGR…TLRSIIAHLE (174 aa)) form the EngB-type G domain. Residues 52–59 (GRSNVGKS), 79–83 (GRTQE), 97–100 (DLPG), 164–167 (TKAD), and 198–200 (TSS) contribute to the GTP site. Mg(2+) contacts are provided by Ser59 and Thr81.

Belongs to the TRAFAC class TrmE-Era-EngA-EngB-Septin-like GTPase superfamily. EngB GTPase family. Requires Mg(2+) as cofactor.

Necessary for normal cell division and for the maintenance of normal septation. In Ruegeria pomeroyi (strain ATCC 700808 / DSM 15171 / DSS-3) (Silicibacter pomeroyi), this protein is Probable GTP-binding protein EngB.